The primary structure comprises 257 residues: uncharacterized protein (257 aa).

Asn-61, Asn-95, Asn-102, Asn-111, Asn-139, Asn-148, and Asn-152 each carry an N-linked (GlcNAc...) asparagine; by host glycan. Residues Trp-233–Ile-253 form a helical membrane-spanning segment.

It is found in the host membrane. The protein resides in the virion. This is an uncharacterized protein from Acanthamoeba polyphaga (Amoeba).